The sequence spans 309 residues: Methionyl-tRNA formyltransferase (309 aa).

Residue 109–112 participates in (6S)-5,6,7,8-tetrahydrofolate binding; that stretch reads SLLP.

It belongs to the Fmt family.

It carries out the reaction L-methionyl-tRNA(fMet) + (6R)-10-formyltetrahydrofolate = N-formyl-L-methionyl-tRNA(fMet) + (6S)-5,6,7,8-tetrahydrofolate + H(+). Functionally, attaches a formyl group to the free amino group of methionyl-tRNA(fMet). The formyl group appears to play a dual role in the initiator identity of N-formylmethionyl-tRNA by promoting its recognition by IF2 and preventing the misappropriation of this tRNA by the elongation apparatus. This is Methionyl-tRNA formyltransferase from Clostridium perfringens (strain SM101 / Type A).